A 225-amino-acid polypeptide reads, in one-letter code: Ribose-5-phosphate isomerase A (225 aa).

Residues methionine 1 to aspartate 20 are disordered. Substrate is bound by residues threonine 32 to threonine 35, aspartate 86 to aspartate 89, and lysine 98 to glycine 101. Glutamate 107 functions as the Proton acceptor in the catalytic mechanism. Lysine 125 is a binding site for substrate.

It belongs to the ribose 5-phosphate isomerase family. In terms of assembly, homodimer.

The enzyme catalyses aldehydo-D-ribose 5-phosphate = D-ribulose 5-phosphate. It functions in the pathway carbohydrate degradation; pentose phosphate pathway; D-ribose 5-phosphate from D-ribulose 5-phosphate (non-oxidative stage): step 1/1. In terms of biological role, catalyzes the reversible conversion of ribose-5-phosphate to ribulose 5-phosphate. This chain is Ribose-5-phosphate isomerase A, found in Natronomonas pharaonis (strain ATCC 35678 / DSM 2160 / CIP 103997 / JCM 8858 / NBRC 14720 / NCIMB 2260 / Gabara) (Halobacterium pharaonis).